The sequence spans 622 residues: Probable potassium transport system protein Kup 1 (622 aa).

12 helical membrane-spanning segments follow: residues 11-31 (LTLG…LYAV), 50-70 (ILSI…VTLV), 101-121 (VLLL…VITP), 137-157 (PAFN…LFWV), 168-188 (FFGP…VAQI), 215-235 (FIIL…YADL), 247-267 (WFAV…ALLL), 285-305 (ALLP…QALI), 337-357 (IYLP…VMIF), 366-386 (AYGI…FFVI), 393-413 (PLWL…AFWA), and 419-439 (LFDG…LMIT).

The protein belongs to the HAK/KUP transporter (TC 2.A.72) family.

The protein resides in the cell inner membrane. It catalyses the reaction K(+)(in) + H(+)(in) = K(+)(out) + H(+)(out). In terms of biological role, transport of potassium into the cell. Likely operates as a K(+):H(+) symporter. The protein is Probable potassium transport system protein Kup 1 of Albidiferax ferrireducens (strain ATCC BAA-621 / DSM 15236 / T118) (Rhodoferax ferrireducens).